A 345-amino-acid chain; its full sequence is DNA-directed RNA polymerase subunit alpha (345 aa).

The tract at residues 1 to 233 (MVRNWCSLIR…KQLQVFVGLH (233 aa)) is alpha N-terminal domain (alpha-NTD). The interval 256–345 (LNDILLRHVE…EEMGEIQEEG (90 aa)) is alpha C-terminal domain (alpha-CTD).

This sequence belongs to the RNA polymerase alpha chain family. In terms of assembly, homodimer. The RNAP catalytic core consists of 2 alpha, 1 beta, 1 beta' and 1 omega subunit. When a sigma factor is associated with the core the holoenzyme is formed, which can initiate transcription.

It catalyses the reaction RNA(n) + a ribonucleoside 5'-triphosphate = RNA(n+1) + diphosphate. Functionally, DNA-dependent RNA polymerase catalyzes the transcription of DNA into RNA using the four ribonucleoside triphosphates as substrates. The sequence is that of DNA-directed RNA polymerase subunit alpha from Syntrophus aciditrophicus (strain SB).